A 301-amino-acid chain; its full sequence is uncharacterized protein (301 aa).

It belongs to the asfivirus E301R family. Interacts with host IRF3.

Functionally, plays a role in the inhibition of host innate immune system by acting as a negatively regulator of type I interferon production. Mechanistically, interacts with and prevents host IRF3 nuclear localization to inhibit its transcriptional activity. This is an uncharacterized protein from African swine fever virus (isolate Pig/Kenya/KEN-50/1950) (ASFV).